Consider the following 772-residue polypeptide: General transcription and DNA repair factor IIH helicase subunit XPD (772 aa).

The Helicase ATP-binding domain occupies 7–283 (DLPILFPYPR…QSDSKKLQDE (277 aa)). 42–49 (MPSGTGKT) serves as a coordination point for ATP. C115, C133, C154, and C189 together coordinate [4Fe-4S] cluster. The short motif at 233–236 (DEAH) is the DEAH box element.

Belongs to the helicase family. RAD3/XPD subfamily. In terms of assembly, component of the 7-subunit TFIIH core complex composed of XPB/ptr8, XPD/rad15, ssl1, tfb1, tfb2, tfb4 and tfb5, which is active in NER. The core complex associates with the 3-subunit CTD-kinase module TFIIK composed of mcs2/cyclin H, mcs6/cdk7 and pmh1/tfb3 to form the 10-subunit holoenzyme (holo-TFIIH) active in transcription. Requires [4Fe-4S] cluster as cofactor.

Its subcellular location is the nucleus. It carries out the reaction Couples ATP hydrolysis with the unwinding of duplex DNA at the replication fork by translocating in the 5'-3' direction. This creates two antiparallel DNA single strands (ssDNA). The leading ssDNA polymer is the template for DNA polymerase III holoenzyme which synthesizes a continuous strand.. The enzyme catalyses ATP + H2O = ADP + phosphate + H(+). Functionally, ATP-dependent 5'-3' DNA helicase, component of the general transcription and DNA repair factor IIH (TFIIH) core complex, which is involved in general and transcription-coupled nucleotide excision repair (NER) of damaged DNA and, when complexed to TFIIK, in RNA transcription by RNA polymerase II. In NER, TFIIH acts by opening DNA around the lesion to allow the excision of the damaged oligonucleotide and its replacement by a new DNA fragment. The ATP-dependent helicase activity of XPD/rad15 is required for DNA opening. In transcription, TFIIH has an essential role in transcription initiation. When the pre-initiation complex (PIC) has been established, TFIIH is required for promoter opening and promoter escape. Phosphorylation of the C-terminal tail (CTD) of the largest subunit of RNA polymerase II by the kinase module TFIIK controls the initiation of transcription. XPD/rad15 acts by forming a bridge between TFIIK and the core-TFIIH complex. Involved in the maintenance of the fidelity of DNA replication. This is General transcription and DNA repair factor IIH helicase subunit XPD from Schizosaccharomyces pombe (strain 972 / ATCC 24843) (Fission yeast).